The sequence spans 311 residues: Aspartate carbamoyltransferase catalytic subunit (311 aa).

Residues Arg-55 and Thr-56 each coordinate carbamoyl phosphate. Lys-85 serves as a coordination point for L-aspartate. Residues Arg-106, His-135, and Gln-138 each coordinate carbamoyl phosphate. L-aspartate contacts are provided by Arg-168 and Arg-230. Positions 268 and 269 each coordinate carbamoyl phosphate.

The protein belongs to the aspartate/ornithine carbamoyltransferase superfamily. ATCase family. As to quaternary structure, heterododecamer (2C3:3R2) of six catalytic PyrB chains organized as two trimers (C3), and six regulatory PyrI chains organized as three dimers (R2).

It catalyses the reaction carbamoyl phosphate + L-aspartate = N-carbamoyl-L-aspartate + phosphate + H(+). It participates in pyrimidine metabolism; UMP biosynthesis via de novo pathway; (S)-dihydroorotate from bicarbonate: step 2/3. Functionally, catalyzes the condensation of carbamoyl phosphate and aspartate to form carbamoyl aspartate and inorganic phosphate, the committed step in the de novo pyrimidine nucleotide biosynthesis pathway. The polypeptide is Aspartate carbamoyltransferase catalytic subunit (Escherichia coli (strain 55989 / EAEC)).